We begin with the raw amino-acid sequence, 119 residues long: Large ribosomal subunit protein bL20 (119 aa).

It belongs to the bacterial ribosomal protein bL20 family.

Its function is as follows. Binds directly to 23S ribosomal RNA and is necessary for the in vitro assembly process of the 50S ribosomal subunit. It is not involved in the protein synthesizing functions of that subunit. The sequence is that of Large ribosomal subunit protein bL20 from Rhodospirillum centenum (strain ATCC 51521 / SW).